The chain runs to 135 residues: Transcription antitermination protein NusB (135 aa).

Belongs to the NusB family.

Its function is as follows. Involved in transcription antitermination. Required for transcription of ribosomal RNA (rRNA) genes. Binds specifically to the boxA antiterminator sequence of the ribosomal RNA (rrn) operons. This chain is Transcription antitermination protein NusB, found in Wolinella succinogenes (strain ATCC 29543 / DSM 1740 / CCUG 13145 / JCM 31913 / LMG 7466 / NCTC 11488 / FDC 602W) (Vibrio succinogenes).